The chain runs to 194 residues: Inosine triphosphate pyrophosphatase (194 aa).

Residue 8–13 (TGNANK) coordinates ITP. A Mg(2+)-binding site is contributed by Glu-47. ITP-binding positions include Lys-59, 75-76 (DT), Lys-92, 151-154 (FGWD), Lys-174, and 179-180 (HR).

It belongs to the HAM1 NTPase family. As to quaternary structure, homodimer. Mg(2+) is required as a cofactor. Mn(2+) serves as cofactor.

The protein localises to the cytoplasm. It localises to the nucleus. It carries out the reaction ITP + H2O = IMP + diphosphate + H(+). It catalyses the reaction dITP + H2O = dIMP + diphosphate + H(+). The catalysed reaction is XTP + H2O = XMP + diphosphate + H(+). Functionally, pyrophosphatase that hydrolyzes non-canonical purine nucleotides such as inosine triphosphate (ITP), deoxyinosine triphosphate (dITP) or xanthosine 5'-triphosphate (XTP) to their respective monophosphate derivatives. The enzyme does not distinguish between the deoxy- and ribose forms. Probably excludes non-canonical purines from RNA and DNA precursor pools, thus preventing their incorporation into RNA and DNA and avoiding chromosomal lesions. This is Inosine triphosphate pyrophosphatase from Scheffersomyces stipitis (strain ATCC 58785 / CBS 6054 / NBRC 10063 / NRRL Y-11545) (Yeast).